We begin with the raw amino-acid sequence, 77 residues long: Acyl carrier protein (77 aa).

In terms of domain architecture, Carrier spans 2–77 (SDVAEKVKKI…DAIAYIEEKK (76 aa)). An O-(pantetheine 4'-phosphoryl)serine modification is found at Ser-37.

This sequence belongs to the acyl carrier protein (ACP) family. 4'-phosphopantetheine is transferred from CoA to a specific serine of apo-ACP by AcpS. This modification is essential for activity because fatty acids are bound in thioester linkage to the sulfhydryl of the prosthetic group.

The protein resides in the cytoplasm. The protein operates within lipid metabolism; fatty acid biosynthesis. In terms of biological role, carrier of the growing fatty acid chain in fatty acid biosynthesis. This Desulfovibrio desulfuricans (strain ATCC 27774 / DSM 6949 / MB) protein is Acyl carrier protein.